We begin with the raw amino-acid sequence, 250 residues long: Adenosylcobinamide-GDP ribazoletransferase (250 aa).

A run of 6 helical transmembrane segments spans residues 32–52, 59–79, 113–133, 136–156, 185–205, and 230–250; these read KGII…MVAY, LAHS…TGGL, GVLA…GLGE, IYWG…YGCY, LTFI…LLPI, and CELT…AGLF.

The protein belongs to the CobS family. The cofactor is Mg(2+).

It localises to the cell membrane. It carries out the reaction alpha-ribazole + adenosylcob(III)inamide-GDP = adenosylcob(III)alamin + GMP + H(+). It catalyses the reaction alpha-ribazole 5'-phosphate + adenosylcob(III)inamide-GDP = adenosylcob(III)alamin 5'-phosphate + GMP + H(+). It participates in cofactor biosynthesis; adenosylcobalamin biosynthesis; adenosylcobalamin from cob(II)yrinate a,c-diamide: step 7/7. Functionally, joins adenosylcobinamide-GDP and alpha-ribazole to generate adenosylcobalamin (Ado-cobalamin). Also synthesizes adenosylcobalamin 5'-phosphate from adenosylcobinamide-GDP and alpha-ribazole 5'-phosphate. In Alkaliphilus metalliredigens (strain QYMF), this protein is Adenosylcobinamide-GDP ribazoletransferase.